The following is a 284-amino-acid chain: Phosphonates import ATP-binding protein PhnC 1 (284 aa).

In terms of domain architecture, ABC transporter spans 5-253 (IEVRGLSKSF…MLRDLYGSEA (249 aa)). 38-45 (GASGSGKS) is a binding site for ATP.

It belongs to the ABC transporter superfamily. Phosphonates importer (TC 3.A.1.9.1) family. The complex is composed of two ATP-binding proteins (PhnC), two transmembrane proteins (PhnE) and a solute-binding protein (PhnD).

The protein resides in the cell inner membrane. It carries out the reaction phosphonate(out) + ATP + H2O = phosphonate(in) + ADP + phosphate + H(+). Part of the ABC transporter complex PhnCDE involved in phosphonates import. Responsible for energy coupling to the transport system. The polypeptide is Phosphonates import ATP-binding protein PhnC 1 (Cupriavidus metallidurans (strain ATCC 43123 / DSM 2839 / NBRC 102507 / CH34) (Ralstonia metallidurans)).